Consider the following 537-residue polypeptide: Protein disulfide isomerase-like 1-5 (537 aa).

The N-terminal stretch at 1–29 (MSLIPKPISKVSTFTFILLILLSFTIIIA) is a signal peptide. The Thioredoxin 1 domain occupies 58–184 (LQEDRPEQQS…IVIWVQKKTG (127 aa)). The active-site Nucleophile is the cysteine 106. Residues asparagine 160, asparagine 364, and asparagine 416 are each glycosylated (N-linked (GlcNAc...) asparagine). Positions 380–526 (LLESDPSPNS…IAVFINEELL (147 aa)) constitute a Thioredoxin 2 domain. Residues cysteine 447 and cysteine 450 each act as nucleophile in the active site. A disulfide bond links cysteine 447 and cysteine 450. Asparagine 530 carries an N-linked (GlcNAc...) asparagine glycan. Residues 534-537 (KDEL) carry the Prevents secretion from ER motif.

It belongs to the protein disulfide isomerase family. As to expression, widely expressed.

It localises to the endoplasmic reticulum lumen. It carries out the reaction Catalyzes the rearrangement of -S-S- bonds in proteins.. Its function is as follows. Acts as a protein-folding catalyst that interacts with nascent polypeptides to catalyze the formation, isomerization, and reduction or oxidation of disulfide bonds. This is Protein disulfide isomerase-like 1-5 (PDIL1-5) from Arabidopsis thaliana (Mouse-ear cress).